Here is a 566-residue protein sequence, read N- to C-terminus: Glutamate--tRNA ligase (566 aa).

The short motif at 93 to 103 (PNPDYTIHLGN) is the 'HIGH' region element.

It belongs to the class-I aminoacyl-tRNA synthetase family. Glutamate--tRNA ligase type 2 subfamily.

The protein resides in the cytoplasm. It carries out the reaction tRNA(Glu) + L-glutamate + ATP = L-glutamyl-tRNA(Glu) + AMP + diphosphate. Functionally, catalyzes the attachment of glutamate to tRNA(Glu) in a two-step reaction: glutamate is first activated by ATP to form Glu-AMP and then transferred to the acceptor end of tRNA(Glu). The chain is Glutamate--tRNA ligase from Staphylothermus marinus (strain ATCC 43588 / DSM 3639 / JCM 9404 / F1).